A 681-amino-acid polypeptide reads, in one-letter code: Methionine--tRNA ligase (681 aa).

Positions 18–28 (PYANGSIHLGH) match the 'HIGH' region motif. 4 residues coordinate Zn(2+): Cys149, Cys152, Cys162, and Cys165. The short motif at 334-338 (KMSKS) is the 'KMSKS' region element. Lys337 provides a ligand contact to ATP. Residues 580–681 (DFAKLDLRIV…NGAEPGQRVS (102 aa)) form the tRNA-binding domain.

This sequence belongs to the class-I aminoacyl-tRNA synthetase family. MetG type 1 subfamily. In terms of assembly, homodimer. It depends on Zn(2+) as a cofactor.

It localises to the cytoplasm. The enzyme catalyses tRNA(Met) + L-methionine + ATP = L-methionyl-tRNA(Met) + AMP + diphosphate. Is required not only for elongation of protein synthesis but also for the initiation of all mRNA translation through initiator tRNA(fMet) aminoacylation. The sequence is that of Methionine--tRNA ligase from Chromohalobacter salexigens (strain ATCC BAA-138 / DSM 3043 / CIP 106854 / NCIMB 13768 / 1H11).